Reading from the N-terminus, the 796-residue chain is Disintegrin and metalloproteinase domain-containing protein B (796 aa).

A signal peptide spans 1–23 (MKALSCLLAVIATAGSLFQHVDA). At 24–706 (RSHARDRLNN…VSDWVSRHKP (683 aa)) the chain is on the extracellular side. Residues N33, N226, N313, and N407 are each glycosylated (N-linked (GlcNAc...) asparagine). The Peptidase M12B domain occupies 271–510 (RVALIGVVAD…HSILTNCLTT (240 aa)). 3 cysteine pairs are disulfide-bonded: C395–C495, C448–C459, and C580–C600. A Zn(2+)-binding site is contributed by H431. The active site involves E432. Zn(2+)-binding residues include H435 and H441. One can recognise a Disintegrin domain in the interval 519–608 (GQQCGNGIVE…DCPRDTHSKN (90 aa)). Residues 707–727 (IVIGVAVGVGCLLLLAILSCI) form a helical membrane-spanning segment. The Cytoplasmic portion of the chain corresponds to 728–796 (CGRSKKRRPR…PGRMPSTRYA (69 aa)). The segment at 737–796 (RNRKMAPINMRPMPPVYNGWTGPPPNAESPGGHPQYNHVPPPINAPPPAYPGRMPSTRYA) is disordered. Over residues 775–786 (VPPPINAPPPAY) the composition is skewed to pro residues.

It depends on Zn(2+) as a cofactor.

The protein localises to the membrane. Functionally, probable zinc protease. The sequence is that of Disintegrin and metalloproteinase domain-containing protein B (ADM-B) from Arthroderma otae (strain ATCC MYA-4605 / CBS 113480) (Microsporum canis).